The following is a 344-amino-acid chain: Phosphate acyltransferase (344 aa).

This sequence belongs to the PlsX family. Homodimer. Probably interacts with PlsY.

It is found in the cytoplasm. The enzyme catalyses a fatty acyl-[ACP] + phosphate = an acyl phosphate + holo-[ACP]. The protein operates within lipid metabolism; phospholipid metabolism. Its function is as follows. Catalyzes the reversible formation of acyl-phosphate (acyl-PO(4)) from acyl-[acyl-carrier-protein] (acyl-ACP). This enzyme utilizes acyl-ACP as fatty acyl donor, but not acyl-CoA. This is Phosphate acyltransferase from Cronobacter sakazakii (strain ATCC BAA-894) (Enterobacter sakazakii).